A 163-amino-acid chain; its full sequence is K88 minor fimbrial subunit FaeF (163 aa).

The signal sequence occupies residues 1–22; the sequence is MKKTMMAAALVLSALSIQSALA.

The protein resides in the fimbrium. Functionally, K88 minor fimbrial subunit, plays an essential role in the biogenesis of the K88 fimbriae. required at some step in the initiation and/or elongation of the K88 fimbriae. The protein is K88 minor fimbrial subunit FaeF (faeF) of Escherichia coli.